The primary structure comprises 150 residues: D-aminoacyl-tRNA deacylase (150 aa).

The Gly-cisPro motif, important for rejection of L-amino acids signature appears at 136–137; the sequence is GP.

It belongs to the DTD family. In terms of assembly, homodimer.

It is found in the cytoplasm. The enzyme catalyses glycyl-tRNA(Ala) + H2O = tRNA(Ala) + glycine + H(+). It carries out the reaction a D-aminoacyl-tRNA + H2O = a tRNA + a D-alpha-amino acid + H(+). An aminoacyl-tRNA editing enzyme that deacylates mischarged D-aminoacyl-tRNAs. Also deacylates mischarged glycyl-tRNA(Ala), protecting cells against glycine mischarging by AlaRS. Acts via tRNA-based rather than protein-based catalysis; rejects L-amino acids rather than detecting D-amino acids in the active site. By recycling D-aminoacyl-tRNA to D-amino acids and free tRNA molecules, this enzyme counteracts the toxicity associated with the formation of D-aminoacyl-tRNA entities in vivo and helps enforce protein L-homochirality. This Staphylococcus aureus (strain MRSA252) protein is D-aminoacyl-tRNA deacylase.